Here is a 694-residue protein sequence, read N- to C-terminus: MSDQEFDLSKIRNIGIMAHIDAGKTTTTERILYYAGRTHKIGEVHEGGATMDWMEQEQERGITITSAATTVFWLDCKINIIDTPGHVDFTIEVERSLRVLDGAVAVFDAVSGVEPQSETVWRQANKYGVPRIAFVNKMDRMGADYFAAVESMKEKLGANAVAVHCPIGSESQFVGMVDLISQKALYFLDETLGAKWEEREIPEELKEKCAELRYALLEELATVDESNEAFMMKVLEDPDAITEEEIHSVMRKGVIENKINPVLCGTAFKNKGVQQLLNVIVKWLPSPKDRGTIHGINLKNNEEVYLEPRRDGPLAALAFKIMTDPYVGRITFIRIYSGTLKKGSAILNSTKDKKERISRLLEMHANERTDRDEFTVGDIGACVGLKYSVTGDTLCEENQEIVLERIEIPEPVIDMAIEPKSKGDREKLAQALSALSEEDPTFRVTSNEEIGQTIISGMGELHLDILRDRMIREFKVEANVGKPQVSYKETITTSSNSETKYVKQSGGRGQYAHVCLEIEPNEPGKGNEIVSKIVGGVIPKEYIPAVMKGVEEGLNTGVLAGYGLVDVKVNIVFGSYHEVDSSEMAFKICGSMAVKEACRKAAPVILEPIMKIAVITPEDHLGDVIGDLNRRRGKILGQESSRGMAQVNAEVPLSEMFGYTTSLRSLTSGRATSTMEPAFFAKVPQKIQEEIVKK.

One can recognise a tr-type G domain in the interval 9 to 288 (SKIRNIGIMA…VIVKWLPSPK (280 aa)). Residues 18-25 (AHIDAGKT), 82-86 (DTPGH), and 136-139 (NKMD) contribute to the GTP site.

The protein belongs to the TRAFAC class translation factor GTPase superfamily. Classic translation factor GTPase family. EF-G/EF-2 subfamily.

The protein localises to the cytoplasm. Functionally, catalyzes the GTP-dependent ribosomal translocation step during translation elongation. During this step, the ribosome changes from the pre-translocational (PRE) to the post-translocational (POST) state as the newly formed A-site-bound peptidyl-tRNA and P-site-bound deacylated tRNA move to the P and E sites, respectively. Catalyzes the coordinated movement of the two tRNA molecules, the mRNA and conformational changes in the ribosome. This Chlamydia abortus (strain DSM 27085 / S26/3) (Chlamydophila abortus) protein is Elongation factor G.